Reading from the N-terminus, the 120-residue chain is Phosphoribosyl-AMP cyclohydrolase (120 aa).

Position 75 (Asp-75) interacts with Mg(2+). Cys-76 provides a ligand contact to Zn(2+). 2 residues coordinate Mg(2+): Asp-77 and Asp-79. Cys-92 and Cys-99 together coordinate Zn(2+).

The protein belongs to the PRA-CH family. In terms of assembly, homodimer. Mg(2+) serves as cofactor. Requires Zn(2+) as cofactor.

The protein resides in the cytoplasm. The enzyme catalyses 1-(5-phospho-beta-D-ribosyl)-5'-AMP + H2O = 1-(5-phospho-beta-D-ribosyl)-5-[(5-phospho-beta-D-ribosylamino)methylideneamino]imidazole-4-carboxamide. It functions in the pathway amino-acid biosynthesis; L-histidine biosynthesis; L-histidine from 5-phospho-alpha-D-ribose 1-diphosphate: step 3/9. Catalyzes the hydrolysis of the adenine ring of phosphoribosyl-AMP. The polypeptide is Phosphoribosyl-AMP cyclohydrolase (Haloarcula marismortui (strain ATCC 43049 / DSM 3752 / JCM 8966 / VKM B-1809) (Halobacterium marismortui)).